A 160-amino-acid polypeptide reads, in one-letter code: MLGNKFVAQLALQHLRNRGLVNSPSRLTFVRNRFAWGSDAVGPNVPVGGKMGASENPELHTYDGDYRGTISKGDKPIPDYFYRTPTTGRTYIDRCVTYFISAVIWAWFSYHMYYHSGHLLGHWYMPYLSEFTDEELGIPKDSAEDPEYWGNHKKEYGTYR.

This sequence belongs to the complex I NDUFB2 subunit family. In terms of assembly, complex I is composed of 45 different subunits.

It localises to the mitochondrion inner membrane. Its function is as follows. Accessory subunit of the mitochondrial membrane respiratory chain NADH dehydrogenase (Complex I), that is believed not to be involved in catalysis. Complex I functions in the transfer of electrons from NADH to the respiratory chain. The immediate electron acceptor for the enzyme is believed to be ubiquinone. This is Probable NADH dehydrogenase [ubiquinone] 1 beta subcomplex subunit 2, mitochondrial from Caenorhabditis elegans.